The primary structure comprises 434 residues: ATP-dependent protease ATPase subunit HslU (434 aa).

Residues V18, 60-65, D247, E312, and R384 contribute to the ATP site; that span reads GVGKTE.

Belongs to the ClpX chaperone family. HslU subfamily. As to quaternary structure, a double ring-shaped homohexamer of HslV is capped on each side by a ring-shaped HslU homohexamer. The assembly of the HslU/HslV complex is dependent on binding of ATP.

It localises to the cytoplasm. Functionally, ATPase subunit of a proteasome-like degradation complex; this subunit has chaperone activity. The binding of ATP and its subsequent hydrolysis by HslU are essential for unfolding of protein substrates subsequently hydrolyzed by HslV. HslU recognizes the N-terminal part of its protein substrates and unfolds these before they are guided to HslV for hydrolysis. The protein is ATP-dependent protease ATPase subunit HslU of Hyphomonas neptunium (strain ATCC 15444).